Reading from the N-terminus, the 428-residue chain is Neuromedin-U receptor 1 (428 aa).

The Extracellular portion of the chain corresponds to 1–59 (MTPPCLNCSIFPGALSPNASRSPLVCNISEFKWPYQPEDLNLTDEALRLKYLGPQQMKQ). 2 N-linked (GlcNAc...) asparagine glycosylation sites follow: Asn-27 and Asn-41. The helical transmembrane segment at 60–80 (FVPICVTYLLIFVVGTLGNGL) threads the bilayer. The Cytoplasmic segment spans residues 81–96 (TCTVILRNKTMRTPTN). A helical membrane pass occupies residues 97 to 117 (FYLFSLAVSDMLVLLVGLPLE). At 118-137 (LYEMQQNYPFQLGASACYFR) the chain is on the extracellular side. Cysteines 134 and 219 form a disulfide. The helical transmembrane segment at 138–158 (ILLLETVCLASVLNVTALSVE) threads the bilayer. At 159–181 (RYVAVVRPLQAKSVMTRAHVRRM) the chain is on the cytoplasmic side. The chain crosses the membrane as a helical span at residues 182–202 (VGAIWVLATLFSLPNTSLHGL). The Extracellular portion of the chain corresponds to 203-235 (SQLTVPCRGPVPDSAICSLVGPMDFYKLVVLTT). Residues 236 to 256 (ALLFFCLPMVTISVLYLLIGL) traverse the membrane as a helical segment. The Cytoplasmic portion of the chain corresponds to 257 to 294 (RLRRERMLLQVEVKGRKTAATQETSHRRIQLQDRGRRQ). The helical transmembrane segment at 295 to 315 (VTKMLFALVVVFGICWAPFHA) threads the bilayer. Over 316–339 (DRIMWSLVYGHSTEGLHLAYQCVH) the chain is Extracellular. The chain crosses the membrane as a helical span at residues 340–360 (IASGIFFYLGSAANPVLYSLM). Topologically, residues 361-428 (STRFRETFLQ…PGCQQETDPS (68 aa)) are cytoplasmic.

The protein belongs to the G-protein coupled receptor 1 family. Ubiquitously expressed.

It is found in the cell membrane. Receptor for the neuromedin-U and neuromedin-S neuropeptides. The chain is Neuromedin-U receptor 1 (Nmur1) from Mus musculus (Mouse).